The chain runs to 843 residues: MSIASQKKVKPSFVCLRCKQRKIKCDKLWPTCSKCKASSSICSYEVEPGRINKSPTIENAPHRDIRNITPASMSASGSFTSILNPSTKDWEMKNFAMNLSNAHDKLVVMNNTTIVDSPFAFHSILQHDLYAKALTTCIHERILIDVERHRENVSANNKKRELNLTIGDIGPLFFIDKAALKFIENTSKTSKLYPPIDFLYNTYDYEQAHPEENNDKISINILLEELSKYFLNKNEVDGLIVDFYKTIYPVYPLLEISLFEDNIRELLQLNEFNGYNIVFAGKDSRRKLETITLLTIILAFSYRRLSLSTSHSFKESFGVKSNNLTLLAHKLLALMNVFQYVNEHTLCCLLYFFILRYLNPDQADMYPTHSDILNLKFLENVAIKLGLNEEPFQYTRYVSESDDYPRLFNLRRKLWLGVQFLKFGILIPEGDSDILSLEYLRSFMKTDESLPELFERNYASTNNLDLSLMATAENIYHLHLSLQVLLTSCFPINGPSYLKEVLDNIDKTKDFLNQKFPLILSSLGEPRMKSLHINVPSSLANEESFDFSTFEENETFIANVISYTCTMNIYDSLSLHFENQCFKNALEYKTYYHRFTFTAIQDYLTLLKLISEYFNGSLLHLREPFGFATQKVVRFSIHRLLIFQATLLVRLFYKKDTCDRSSAAMGMLNDRNGRLSRVIEKMIKLMSYHMKLLVEIVISKLEKSYLGSFISVSIFRYIIYLVDTDALSAFISDYWKSDAVMDERYSRIHRIVGLKWGMGRDKSFSFTSKLNNPQFLGSLDLEILEELEKLISAQEFSRNFTEDVDESLQSEIDLMNYDNEALNQLMAIDLDKLLGIFPNLSNF.

The zn(2)-C6 fungal-type DNA-binding region spans cysteine 15–cysteine 42.

The protein resides in the nucleus. Functionally, required for growth on non-fermentable carbon sources. This is an uncharacterized protein from Saccharomyces cerevisiae (strain ATCC 204508 / S288c) (Baker's yeast).